The following is a 183-amino-acid chain: UPF0316 protein GTNG_0803 (183 aa).

A run of 3 helical transmembrane segments spans residues 5–25 (IVLVLALQLVYVPILTLRTIF), 33–53 (LAAFMGFLEALIYVFGLSIVF), and 59–79 (YIVMIVYAAGFGARGFLLEDI).

It belongs to the UPF0316 family.

The protein localises to the cell membrane. The sequence is that of UPF0316 protein GTNG_0803 from Geobacillus thermodenitrificans (strain NG80-2).